A 207-amino-acid polypeptide reads, in one-letter code: Protein GET1 (207 aa).

Residues 1-4 are Lumenal-facing; sequence MPSL. The helical transmembrane segment at 5-24 threads the bilayer; that stretch reads LISVLFLHIAIYIINTIAAS. Residues 25 to 110 are Cytoplasmic-facing; it reads TIDSLLWLIY…FFDVAVKALR (86 aa). Positions 44 to 97 form a coiled coil; it reads IAREQHQMKLEVVQLKREMNATSSQDEFAKWAKLRRRHDKALEEYEVKNKQFSR. A helical transmembrane segment spans residues 111-131; the sequence is WAGTSGLIVFLQFWFSKTPIF. At 132–155 the chain is on the lumenal side; sequence TLPPSWIPWQVEWVLSFPRAPMGT. The helical transmembrane segment at 156–172 threads the bilayer; that stretch reads VSIQVWGGACAVVVALI. The Cytoplasmic portion of the chain corresponds to 173–207; that stretch reads GEAIGATVRYLYASKDSMEAIKVGAGAVEKEKKRQ.

The protein belongs to the WRB/GET1 family. As to quaternary structure, interacts with GET3.

The protein localises to the endoplasmic reticulum membrane. In terms of biological role, required for the post-translational delivery of tail-anchored (TA) proteins to the endoplasmic reticulum. Acts as a membrane receptor for soluble GET3, which recognizes and selectively binds the transmembrane domain of TA proteins in the cytosol. This is Protein GET1 from Paracoccidioides brasiliensis (strain Pb18).